The chain runs to 429 residues: Tryptophan synthase beta chain 2 (429 aa).

N6-(pyridoxal phosphate)lysine is present on Lys111.

Belongs to the TrpB family. Tetramer of two alpha and two beta chains. Requires pyridoxal 5'-phosphate as cofactor.

It carries out the reaction (1S,2R)-1-C-(indol-3-yl)glycerol 3-phosphate + L-serine = D-glyceraldehyde 3-phosphate + L-tryptophan + H2O. Its pathway is amino-acid biosynthesis; L-tryptophan biosynthesis; L-tryptophan from chorismate: step 5/5. The beta subunit is responsible for the synthesis of L-tryptophan from indole and L-serine. The chain is Tryptophan synthase beta chain 2 (trpB2) from Saccharolobus solfataricus (strain ATCC 35092 / DSM 1617 / JCM 11322 / P2) (Sulfolobus solfataricus).